The primary structure comprises 209 residues: Bcl-2 homologous antagonist/killer (209 aa).

Residues 1-28 (MASGQGPGPPKVGCDESPSPSEQQVAQD) are disordered. Position 2 is an N-acetylalanine (A2). The segment covering 18 to 27 (PSPSEQQVAQ) has biased composition (polar residues). Positions 72-86 (VGRQLALIGDDINRR) match the BH3 motif. Residues 115-134 (SLFKSGISWGRVVALLGFGY) carry the BH1 motif. Residues D158 and H162 each coordinate Zn(2+). Residues 167-182 (RWIAQRGGWVAALNFR) carry the BH2 motif. A helical transmembrane segment spans residues 186–203 (ILTVMVIFGVVLLGQFVV).

It belongs to the Bcl-2 family. Homodimer. Formation of the homodimer is zinc-dependent. Forms heterodimers with BCL2 and BCL2L1 isoform Bcl-X(L). Forms heterooligomers with BAX. Interacts with BCL2A1. Interacts withRTL10/BOP. Interacts with VDAC1. Interacts with GIMAP3/IAN4 and GIMAP5/IAN5. As to quaternary structure, (Microbial infection) Interacts with gamma-herpesvirus 68 protein vBCL2. As to expression, widely expressed.

The protein localises to the mitochondrion outer membrane. In terms of biological role, in the presence of an appropriate stimulus, accelerates programmed cell death by binding to, and antagonizing the anti-apoptotic action of BCL2. The sequence is that of Bcl-2 homologous antagonist/killer (Bak1) from Mus musculus (Mouse).